Consider the following 62-residue polypeptide: MLKCDICGKGPLAGYQYSHSHRKSIRKWKPNIKKVRAIVDDTPVRLHVCTKCLKAGKVQRAL.

It belongs to the bacterial ribosomal protein bL28 family.

The chain is Large ribosomal subunit protein bL28 from Thermoanaerobacter pseudethanolicus (strain ATCC 33223 / 39E) (Clostridium thermohydrosulfuricum).